The sequence spans 648 residues: 1-deoxy-D-xylulose-5-phosphate synthase (648 aa).

Residues H74 and 115–117 (GHA) each bind thiamine diphosphate. D146 is a Mg(2+) binding site. Thiamine diphosphate contacts are provided by residues 147–148 (GA), N176, Y292, and E375. Mg(2+) is bound at residue N176.

It belongs to the transketolase family. DXPS subfamily. In terms of assembly, homodimer. Mg(2+) serves as cofactor. It depends on thiamine diphosphate as a cofactor.

It catalyses the reaction D-glyceraldehyde 3-phosphate + pyruvate + H(+) = 1-deoxy-D-xylulose 5-phosphate + CO2. It functions in the pathway metabolic intermediate biosynthesis; 1-deoxy-D-xylulose 5-phosphate biosynthesis; 1-deoxy-D-xylulose 5-phosphate from D-glyceraldehyde 3-phosphate and pyruvate: step 1/1. Functionally, catalyzes the acyloin condensation reaction between C atoms 2 and 3 of pyruvate and glyceraldehyde 3-phosphate to yield 1-deoxy-D-xylulose-5-phosphate (DXP). This chain is 1-deoxy-D-xylulose-5-phosphate synthase, found in Synechococcus sp. (strain JA-2-3B'a(2-13)) (Cyanobacteria bacterium Yellowstone B-Prime).